A 99-amino-acid chain; its full sequence is Phosphoribosyl-ATP pyrophosphatase (99 aa).

This sequence belongs to the PRA-PH family.

It localises to the cytoplasm. The enzyme catalyses 1-(5-phospho-beta-D-ribosyl)-ATP + H2O = 1-(5-phospho-beta-D-ribosyl)-5'-AMP + diphosphate + H(+). It participates in amino-acid biosynthesis; L-histidine biosynthesis; L-histidine from 5-phospho-alpha-D-ribose 1-diphosphate: step 2/9. This chain is Phosphoribosyl-ATP pyrophosphatase, found in Methanosphaerula palustris (strain ATCC BAA-1556 / DSM 19958 / E1-9c).